The sequence spans 53 residues: UPF0391 membrane protein Bxeno_A1464 (53 aa).

Transmembrane regions (helical) follow at residues 5–25 and 30–50; these read AAIFFIIAIIAAVFGFGGIAA and IAKVLFFIFVVIFLVTLLMGV.

This sequence belongs to the UPF0391 family.

Its subcellular location is the cell membrane. The protein is UPF0391 membrane protein Bxeno_A1464 of Paraburkholderia xenovorans (strain LB400).